The sequence spans 557 residues: 6-methylpretetramide 4-monooxygenase (557 aa).

FAD is bound by residues 9 to 38 (QVLI…VIDR) and 278 to 288 (MRSGRCFVAGD). Residues 530-557 (LPEDTAPGAGDSAGRPAPDGTRRGVTTE) form a disordered region.

It belongs to the PheA/TfdB FAD monooxygenase family. Requires FAD as cofactor.

The enzyme catalyses 6-methylpretetramide + NADPH + O2 + 2 H(+) = 4-hydroxy-6-methylpretetramide + NADP(+) + H2O. It carries out the reaction 4-hydroxy-6-methylpretetramide + NADPH + O2 = 4-dedimethylamino-4-oxo-anhydrotetracycline + NADP(+) + H2O. The protein operates within antibiotic biosynthesis; oxytetracycline biosynthesis. Involved in the biosynthesis of the tetracycline antibiotic, oxytetracycline. Catalyzes the double hydroxylation of 6-methylpretetramide to yield 4-keto-anhydrotetracycline, via the insertion of oxygen atoms at the C-12a and C-4 positions of 6-pretetramid. In Streptomyces rimosus, this protein is 6-methylpretetramide 4-monooxygenase.